Here is a 208-residue protein sequence, read N- to C-terminus: Holliday junction resolvase RecU (208 aa).

4 residues coordinate Mg(2+): Thr86, Asp88, Glu101, and Gln120.

Belongs to the RecU family. Requires Mg(2+) as cofactor.

Its subcellular location is the cytoplasm. The catalysed reaction is Endonucleolytic cleavage at a junction such as a reciprocal single-stranded crossover between two homologous DNA duplexes (Holliday junction).. Endonuclease that resolves Holliday junction intermediates in genetic recombination. Cleaves mobile four-strand junctions by introducing symmetrical nicks in paired strands. Promotes annealing of linear ssDNA with homologous dsDNA. Required for DNA repair, homologous recombination and chromosome segregation. The protein is Holliday junction resolvase RecU of Lacticaseibacillus casei (strain BL23) (Lactobacillus casei).